The following is a 307-amino-acid chain: Ribosomal RNA small subunit methyltransferase H (307 aa).

S-adenosyl-L-methionine contacts are provided by residues 32–34 (GGH), Asp-52, Phe-78, Asp-99, and Gln-106.

The protein belongs to the methyltransferase superfamily. RsmH family.

Its subcellular location is the cytoplasm. It catalyses the reaction cytidine(1402) in 16S rRNA + S-adenosyl-L-methionine = N(4)-methylcytidine(1402) in 16S rRNA + S-adenosyl-L-homocysteine + H(+). Functionally, specifically methylates the N4 position of cytidine in position 1402 (C1402) of 16S rRNA. This Acinetobacter baumannii (strain AB0057) protein is Ribosomal RNA small subunit methyltransferase H.